The chain runs to 256 residues: Protein crossbronx-like (256 aa).

One can recognise a UBC core domain in the interval 17–179 (NQGYKVLAEY…AKVSILWSCQ (163 aa)).

It belongs to the ubiquitin-conjugating enzyme family. FTS subfamily.

The chain is Protein crossbronx-like from Drosophila virilis (Fruit fly).